Reading from the N-terminus, the 1087-residue chain is Alpha-mannosidase G (1087 aa).

4 residues coordinate Zn(2+): histidine 264, aspartate 266, aspartate 376, and histidine 579. The active-site Nucleophile is the aspartate 376.

Belongs to the glycosyl hydrolase 38 family. Zn(2+) serves as cofactor.

It catalyses the reaction Hydrolysis of terminal, non-reducing alpha-D-mannose residues in alpha-D-mannosides.. The polypeptide is Alpha-mannosidase G (manG) (Dictyostelium discoideum (Social amoeba)).